Here is a 387-residue protein sequence, read N- to C-terminus: 3-ketoacyl-CoA thiolase (387 aa).

The active-site Acyl-thioester intermediate is C91. Residues H343 and C373 each act as proton acceptor in the active site.

It belongs to the thiolase-like superfamily. Thiolase family. As to quaternary structure, heterotetramer of two alpha chains (FadB) and two beta chains (FadA).

It is found in the cytoplasm. The enzyme catalyses an acyl-CoA + acetyl-CoA = a 3-oxoacyl-CoA + CoA. Its pathway is lipid metabolism; fatty acid beta-oxidation. Its function is as follows. Catalyzes the final step of fatty acid oxidation in which acetyl-CoA is released and the CoA ester of a fatty acid two carbons shorter is formed. Involved in the aerobic and anaerobic degradation of long-chain fatty acids. The protein is 3-ketoacyl-CoA thiolase of Escherichia coli O6:H1 (strain CFT073 / ATCC 700928 / UPEC).